A 192-amino-acid chain; its full sequence is Peptidyl-tRNA hydrolase (192 aa).

Residue Tyr-17 coordinates tRNA. The active-site Proton acceptor is the His-22. Residues Tyr-68, Asn-70, and Asn-116 each coordinate tRNA.

It belongs to the PTH family. In terms of assembly, monomer.

Its subcellular location is the cytoplasm. The enzyme catalyses an N-acyl-L-alpha-aminoacyl-tRNA + H2O = an N-acyl-L-amino acid + a tRNA + H(+). Its function is as follows. Hydrolyzes ribosome-free peptidyl-tRNAs (with 1 or more amino acids incorporated), which drop off the ribosome during protein synthesis, or as a result of ribosome stalling. Functionally, catalyzes the release of premature peptidyl moieties from peptidyl-tRNA molecules trapped in stalled 50S ribosomal subunits, and thus maintains levels of free tRNAs and 50S ribosomes. This is Peptidyl-tRNA hydrolase from Mycolicibacterium vanbaalenii (strain DSM 7251 / JCM 13017 / BCRC 16820 / KCTC 9966 / NRRL B-24157 / PYR-1) (Mycobacterium vanbaalenii).